The primary structure comprises 616 residues: Pentatricopeptide repeat-containing protein At4g15720 (616 aa).

10 PPR repeats span residues 63–93 (DTFT…MCEP), 94–128 (NVVS…RPVP), 130–164 (NEYT…GLRR), 165–199 (NIVV…GRNV), 200–228 (VSWT…FNAA), 235–269 (NQFM…GYES), 270–300 (NTVV…IRCH), 301–335 (SVIS…RINP), 336–371 (NYVT…GVVP), and 372–402 (DSRH…IEVG). The interval 409–484 (LWGALLSAGR…ERACSWIENK (76 aa)) is type E motif. Positions 485 to 515 (DSVYVFHAGDLSCDESGEIERFLKDLEKRMK) are type E(+) motif. Positions 522 to 616 (SSSMITTSSS…NGSCTCRDYW (95 aa)) are type DYW motif.

This sequence belongs to the PPR family. PCMP-H subfamily.

This is Pentatricopeptide repeat-containing protein At4g15720 (PCMP-H1) from Arabidopsis thaliana (Mouse-ear cress).